A 206-amino-acid polypeptide reads, in one-letter code: Octanoyltransferase (206 aa).

Residues 30-206 (PETNDEIWLV…EFVTLLNNSI (177 aa)) enclose the BPL/LPL catalytic domain. Residues 69-76 (RGGQVTYH), 137-139 (SLG), and 150-152 (GIA) each bind substrate. Residue cysteine 168 is the Acyl-thioester intermediate of the active site.

Belongs to the LipB family.

Its subcellular location is the cytoplasm. It carries out the reaction octanoyl-[ACP] + L-lysyl-[protein] = N(6)-octanoyl-L-lysyl-[protein] + holo-[ACP] + H(+). It functions in the pathway protein modification; protein lipoylation via endogenous pathway; protein N(6)-(lipoyl)lysine from octanoyl-[acyl-carrier-protein]: step 1/2. Its function is as follows. Catalyzes the transfer of endogenously produced octanoic acid from octanoyl-acyl-carrier-protein onto the lipoyl domains of lipoate-dependent enzymes. Lipoyl-ACP can also act as a substrate although octanoyl-ACP is likely to be the physiological substrate. The chain is Octanoyltransferase from Francisella tularensis subsp. holarctica (strain FTNF002-00 / FTA).